The primary structure comprises 256 residues: Nuclear shuttle protein (256 aa).

The Bipartite nuclear localization signal motif lies at 18 to 39 (NITNRYPIKRKYVAGHTRPCVR). Residues 81-96 (SRGPSGDGRSRDYIKL) carry the Nuclear localization signal motif. Positions 150-187 (ELFGPYSACYVNLRLLNNQQHRYRVLHSVKRFVSSSGD) are interaction with Arabidopsis thaliana NSI protein.

This sequence belongs to the begomovirus nuclear shuttle protein family. In terms of assembly, binds to single-stranded and double-stranded viral DNA. Interacts with the host nuclear shuttle interacting (NSI) protein. This interaction may allow NSP to recruit NSI monomers to the viral genome and thus regulate nuclear export of viral genome by NSP.

The protein localises to the host nucleus. It localises to the host cytoplasm. Its subcellular location is the host cell membrane. Its function is as follows. Binds to the genomic viral ssDNA, shuttles it into and out of the cell nucleus. Begomoviruses use 2 proteins to transport their DNA from cell to cell. The nuclear shuttle protein (NSP) shuttles it between nucleus and cytoplasm and the movement protein (MP) probably transports the DNA-NSP complex to the cell periphery and facilitates movement across the cell wall. This is Nuclear shuttle protein from Hewittia sublobata (Coralbush).